The sequence spans 119 residues: MVKLTKAKTFQAYLDSCHRRYSCVHCRAHLANHDDLISKSFQGSQGRAYLFNSVVNVGCGPAEERLLLTGLHAVADIYCENCHTTLGWKYEQAFELSQKYKEGKYIIELSHMIKDNGWD.

One can recognise a Yippee domain in the interval 19-116 (RRYSCVHCRA…IELSHMIKDN (98 aa)). 4 residues coordinate Zn(2+): Cys-23, Cys-26, Cys-79, and Cys-82.

This sequence belongs to the yippee family.

The protein localises to the nucleus. The protein resides in the nucleolus. Its function is as follows. May be involved in proliferation and apoptosis in myeloid precursor cells. This chain is Protein yippee-like 3 (ypel3), found in Oryzias latipes (Japanese rice fish).